The chain runs to 271 residues: MVRSILKKYNIKGGTFDQHFLIDAGYLDRIVAAAELSPQDTVLEIGAGIGNLTERLARRAKKVIAVELDPALVSVLHDRFDAAENIEIIAGDALKVDFPEFDKVVSNLPYSISSEITFKLLRHKFKLGVLMYQYEFAVRMVSPPGCKDYSRLTIDTCYFADASIVMKVPKGAFQPAPEVDSAVIKLIPRPAPFEVRDETFFLQFVAAVFSQRRKKLRNAILNTSSLLKIPDIKEIVSQLPEDFMNKRAEDLTPEELASVANMIFDLKSRNF.

Positions 19, 21, 46, 67, 92, and 107 each coordinate S-adenosyl-L-methionine.

This sequence belongs to the class I-like SAM-binding methyltransferase superfamily. rRNA adenine N(6)-methyltransferase family. RsmA subfamily.

The protein localises to the cytoplasm. Specifically dimethylates two adjacent adenosines in the loop of a conserved hairpin near the 3'-end of 16S rRNA in the 30S particle. May play a critical role in biogenesis of 30S subunits. This is Probable ribosomal RNA small subunit methyltransferase A from Methanosarcina mazei (strain ATCC BAA-159 / DSM 3647 / Goe1 / Go1 / JCM 11833 / OCM 88) (Methanosarcina frisia).